A 240-amino-acid polypeptide reads, in one-letter code: Ribose-5-phosphate isomerase (240 aa).

Substrate is bound by residues 34–37 (SGST), 88–91 (DGAD), and 101–104 (KGGG). Glu-110 functions as the Proton acceptor in the catalytic mechanism. Substrate is bound at residue Lys-128.

It belongs to the ribose 5-phosphate isomerase family.

The protein localises to the cytoplasm. It catalyses the reaction aldehydo-D-ribose 5-phosphate = D-ribulose 5-phosphate. Its pathway is carbohydrate degradation; pentose phosphate pathway; D-ribose 5-phosphate from D-ribulose 5-phosphate (non-oxidative stage): step 1/1. Its function is as follows. Involved in the first step of the non-oxidative branch of the pentose phosphate pathway. It catalyzes the reversible conversion of ribose-5-phosphate to ribulose 5-phosphate. This Candida albicans (strain SC5314 / ATCC MYA-2876) (Yeast) protein is Ribose-5-phosphate isomerase (RKI1).